Reading from the N-terminus, the 139-residue chain is Cell division protein SepF (139 aa).

This sequence belongs to the SepF family. In terms of assembly, homodimer. Interacts with FtsZ.

It is found in the cytoplasm. Functionally, cell division protein that is part of the divisome complex and is recruited early to the Z-ring. Probably stimulates Z-ring formation, perhaps through the cross-linking of FtsZ protofilaments. Its function overlaps with FtsA. The protein is Cell division protein SepF of Coprothermobacter proteolyticus (strain ATCC 35245 / DSM 5265 / OCM 4 / BT).